The sequence spans 317 residues: Heme A synthase (317 aa).

The Cytoplasmic segment spans residues 1–6; that stretch reads MQRSLK. A helical transmembrane segment spans residues 7–27; sequence WFASATTLAMLFVLIGGALVT. The Extracellular segment spans residues 28–62; the sequence is KTGSGMGCGRSWPLCNGQWVPDHITPELIIELSHR. A disulfide bridge connects residues cysteine 35 and cysteine 42. Residue glutamate 58 is part of the active site. Residue histidine 61 coordinates heme o. A helical transmembrane segment spans residues 63-83; the sequence is LVSGLAGIMVLILSIWAWRAI. Residues 84 to 90 are Cytoplasmic-facing; that stretch reads GHVQETK. Residues 91 to 111 traverse the membrane as a helical segment; it reads FLAVISFVFLVLQGLIGAAAV. Topologically, residues 112–121 are extracellular; it reads VWGQSDFVLA. The helical transmembrane segment at 122–142 threads the bilayer; the sequence is LHFGISLISFAAVLLLTLLIF. Histidine 123 contributes to the heme o binding site. At 143–159 the chain is on the cytoplasmic side; sequence EIDKTFSAASLSLDGKM. The chain crosses the membrane as a helical span at residues 160–180; sequence RFHIYGITIYSYIVVYTGALV. The Extracellular portion of the chain corresponds to 181 to 211; the sequence is RHTNASLACPSWPLCAKTRLLPVQFHEWVQM. Cysteine 189 and cysteine 195 are oxidised to a cystine. Residues 212 to 232 form a helical membrane-spanning segment; sequence GHRLAAAVIIIWIAAAAIHAV. Heme b is bound at residue histidine 213. The Cytoplasmic segment spans residues 233-243; that stretch reads RHYRRQPVIYY. The chain crosses the membrane as a helical span at residues 244–264; sequence GWLIALLLVLAQMTTGALVVF. Topologically, residues 265-270 are extracellular; that stretch reads TQLNLY. The helical transmembrane segment at 271–291 threads the bilayer; the sequence is IALAHAFFISCLFGVLSYLLL. Residue histidine 275 participates in heme b binding. Residues 292 to 317 are Cytoplasmic-facing; it reads LALRTRRAPVKAADHSAGEAAPATLK.

This sequence belongs to the COX15/CtaA family. Type 1 subfamily. Interacts with CtaB. Heme b is required as a cofactor.

The protein resides in the cell membrane. The enzyme catalyses Fe(II)-heme o + 2 A + H2O = Fe(II)-heme a + 2 AH2. Its pathway is porphyrin-containing compound metabolism; heme A biosynthesis; heme A from heme O: step 1/1. Catalyzes the conversion of heme O to heme A by two successive hydroxylations of the methyl group at C8. The first hydroxylation forms heme I, the second hydroxylation results in an unstable dihydroxymethyl group, which spontaneously dehydrates, resulting in the formyl group of heme A. The sequence is that of Heme A synthase from Geobacillus kaustophilus (strain HTA426).